We begin with the raw amino-acid sequence, 199 residues long: Probable nicotinate-nucleotide adenylyltransferase (199 aa).

Belongs to the NadD family.

The enzyme catalyses nicotinate beta-D-ribonucleotide + ATP + H(+) = deamido-NAD(+) + diphosphate. Its pathway is cofactor biosynthesis; NAD(+) biosynthesis; deamido-NAD(+) from nicotinate D-ribonucleotide: step 1/1. In terms of biological role, catalyzes the reversible adenylation of nicotinate mononucleotide (NaMN) to nicotinic acid adenine dinucleotide (NaAD). In Roseiflexus castenholzii (strain DSM 13941 / HLO8), this protein is Probable nicotinate-nucleotide adenylyltransferase.